Here is a 69-residue protein sequence, read N- to C-terminus: Cytochrome c oxidase subunit 8A, mitochondrial (69 aa).

The transit peptide at 1–25 (MSVLTPLLLRGLTGSARRLPVPRAK) directs the protein to the mitochondrion. Positions 2-19 (SVLTPLLLRGLTGSARRL) match the SIFI-degron motif. At 26-36 (IHSLPPEEKLG) the chain is on the mitochondrial matrix side. Residues 37–60 (IMELAVGLTSCFVTFLLPAGWILS) form a helical membrane-spanning segment. Residues 61–69 (HLETYRRPE) are Mitochondrial intermembrane-facing.

This sequence belongs to the cytochrome c oxidase VIII family. As to quaternary structure, component of the cytochrome c oxidase (complex IV, CIV), a multisubunit enzyme composed of 14 subunits. The complex is composed of a catalytic core of 3 subunits MT-CO1, MT-CO2 and MT-CO3, encoded in the mitochondrial DNA, and 11 supernumerary subunits COX4I, COX5A, COX5B, COX6A, COX6B, COX6C, COX7A, COX7B, COX7C, COX8 and NDUFA4, which are encoded in the nuclear genome. The complex exists as a monomer or a dimer and forms supercomplexes (SCs) in the inner mitochondrial membrane with NADH-ubiquinone oxidoreductase (complex I, CI) and ubiquinol-cytochrome c oxidoreductase (cytochrome b-c1 complex, complex III, CIII), resulting in different assemblies (supercomplex SCI(1)III(2)IV(1) and megacomplex MCI(2)III(2)IV(2)). In response to mitochondrial stress, the precursor protein is ubiquitinated by the SIFI complex in the cytoplasm before mitochondrial import, leading to its degradation. Within the SIFI complex, UBR4 initiates ubiquitin chain that are further elongated or branched by KCMF1.

Its subcellular location is the mitochondrion inner membrane. It participates in energy metabolism; oxidative phosphorylation. Functionally, component of the cytochrome c oxidase, the last enzyme in the mitochondrial electron transport chain which drives oxidative phosphorylation. The respiratory chain contains 3 multisubunit complexes succinate dehydrogenase (complex II, CII), ubiquinol-cytochrome c oxidoreductase (cytochrome b-c1 complex, complex III, CIII) and cytochrome c oxidase (complex IV, CIV), that cooperate to transfer electrons derived from NADH and succinate to molecular oxygen, creating an electrochemical gradient over the inner membrane that drives transmembrane transport and the ATP synthase. Cytochrome c oxidase is the component of the respiratory chain that catalyzes the reduction of oxygen to water. Electrons originating from reduced cytochrome c in the intermembrane space (IMS) are transferred via the dinuclear copper A center (CU(A)) of subunit 2 and heme A of subunit 1 to the active site in subunit 1, a binuclear center (BNC) formed by heme A3 and copper B (CU(B)). The BNC reduces molecular oxygen to 2 water molecules using 4 electrons from cytochrome c in the IMS and 4 protons from the mitochondrial matrix. In Hylobates agilis (Agile gibbon), this protein is Cytochrome c oxidase subunit 8A, mitochondrial (COX8A).